Consider the following 362-residue polypeptide: Ferredoxin--NADP reductase, leaf isozyme 1, chloroplastic (362 aa).

The N-terminal 36 residues, 1-36 (MAAVTAAAVSTSAAAAVTKASPSPAHCFLPCPPRTR), are a transit peptide targeting the chloroplast. Residues 83–205 (KEPYVGKCLL…TGPVGKEMLM (123 aa)) form the FAD-binding FR-type domain. FAD-binding positions include 141 to 144 (RLYS), 162 to 164 (CVK), Tyr168, 179 to 181 (VCS), and Thr220. NADP(+) is bound by residues Ser144 and Lys164. Cys180 and Cys185 are disulfide-bonded. Ser181 carries the phosphoserine modification. Residues Thr220, 252-253 (VP), 282-283 (SR), Lys292, 321-322 (GL), and Glu360 contribute to the NADP(+) site.

It belongs to the ferredoxin--NADP reductase type 1 family. In terms of assembly, heterodimer with LFNR2. Component of high molecular weight thylakoid LFNRs-containing protein complexes containing LIR1, LFNR1, LFNR2, TIC62 and TROL proteins. Interacts directly with LFNR1 and LFNR2; LIR1 increases the affinity of LFNR1 and LFNR2 for TIC62 and subsequent thylakoid relocalization. Requires FAD as cofactor. Post-translationally, may form interchain disulfide bonds with LIR1.

The protein resides in the plastid. Its subcellular location is the chloroplast stroma. It is found in the chloroplast thylakoid membrane. The enzyme catalyses 2 reduced [2Fe-2S]-[ferredoxin] + NADP(+) + H(+) = 2 oxidized [2Fe-2S]-[ferredoxin] + NADPH. It functions in the pathway energy metabolism; photosynthesis. Its function is as follows. Plays a key role in regulating the relative amounts of cyclic and non-cyclic electron flow to meet the demands of the plant for ATP and reducing power. The polypeptide is Ferredoxin--NADP reductase, leaf isozyme 1, chloroplastic (Oryza sativa subsp. indica (Rice)).